The following is a 198-amino-acid chain: UPF0314 protein Saro_1818 (198 aa).

5 helical membrane-spanning segments follow: residues 13–33 (GGSL…LGMG), 62–82 (WYSF…HIVW), 96–116 (LALA…PIII), 153–173 (APVL…LWAI), and 177–197 (LALN…WQGG).

This sequence belongs to the UPF0314 family.

Its subcellular location is the cell membrane. The sequence is that of UPF0314 protein Saro_1818 from Novosphingobium aromaticivorans (strain ATCC 700278 / DSM 12444 / CCUG 56034 / CIP 105152 / NBRC 16084 / F199).